A 410-amino-acid chain; its full sequence is Argininosuccinate synthase (410 aa).

ATP-binding positions include 10 to 18 and A37; that span reads AYSGGLDTS. L-citrulline is bound by residues Y90 and S95. G120 provides a ligand contact to ATP. Residues T122, N126, and D127 each coordinate L-aspartate. N126 contributes to the L-citrulline binding site. L-citrulline-binding residues include R130, S182, S191, E267, and Y279.

The protein belongs to the argininosuccinate synthase family. Type 1 subfamily. As to quaternary structure, homotetramer.

The protein localises to the cytoplasm. The catalysed reaction is L-citrulline + L-aspartate + ATP = 2-(N(omega)-L-arginino)succinate + AMP + diphosphate + H(+). It functions in the pathway amino-acid biosynthesis; L-arginine biosynthesis; L-arginine from L-ornithine and carbamoyl phosphate: step 2/3. This chain is Argininosuccinate synthase, found in Polynucleobacter necessarius subsp. necessarius (strain STIR1).